The following is a 310-amino-acid chain: N-acetyl-gamma-glutamyl-phosphate reductase (310 aa).

Cysteine 117 is a catalytic residue.

This sequence belongs to the NAGSA dehydrogenase family. Type 2 subfamily.

The protein localises to the cytoplasm. It catalyses the reaction N-acetyl-L-glutamate 5-semialdehyde + phosphate + NADP(+) = N-acetyl-L-glutamyl 5-phosphate + NADPH + H(+). It participates in amino-acid biosynthesis; L-arginine biosynthesis; N(2)-acetyl-L-ornithine from L-glutamate: step 3/4. Its function is as follows. Catalyzes the NADPH-dependent reduction of N-acetyl-5-glutamyl phosphate to yield N-acetyl-L-glutamate 5-semialdehyde. The protein is N-acetyl-gamma-glutamyl-phosphate reductase of Rhizobium johnstonii (strain DSM 114642 / LMG 32736 / 3841) (Rhizobium leguminosarum bv. viciae).